The following is a 912-amino-acid chain: Rho guanine nucleotide exchange factor 1 (912 aa).

Residues 41 to 232 (EQNSQFQSLE…GLYMRHLGVR (192 aa)) enclose the RGSL domain. The disordered stretch occupies residues 248–413 (KVMGNRRSDE…PDTLHSLPKS (166 aa)). Over residues 283–313 (DFRHLKAEVDAEKPGATDRKGGVGMPSRDRN) the composition is skewed to basic and acidic residues. The span at 365–381 (STDEGAETESPEPGDEG) shows a compositional bias: acidic residues. Ser374 and Ser409 each carry phosphoserine. Positions 416-605 (KRQEVISELL…REILHHVNQA (190 aa)) constitute a DH domain. A PH domain is found at 647-760 (KLVHEGPLTW…WCALITETAG (114 aa)). Thr695 is modified (phosphothreonine). Tyr738 bears the Phosphotyrosine; by JAK2 mark. 2 disordered regions span residues 763 to 802 (KVPAPASRPKPRPSPSSTREPLLSSSENGNGGRETSPADA) and 841 to 865 (AEEDNGAGPPRDGDGVPGGGPLSPA). Over residues 777-789 (PSSTREPLLSSSE) the composition is skewed to low complexity. Residue Ser863 is modified to Phosphoserine. The stretch at 865–896 (ARTQEIQENLLSLEETMKQLEELEEEFCRLRP) forms a coiled coil.

Interacts with RHOA, GNA12 and GNA13. Homooligomerizes through the coiled coil region. May interact with CCPG1. Interacts with CTNNAL1. Post-translationally, phosphorylated by PKCA. Angiotensin-2 induced Tyr-738 phosphorylation is mediated by JAK2. In terms of tissue distribution, ubiquitously expressed.

The protein localises to the cytoplasm. The protein resides in the membrane. Functionally, seems to play a role in the regulation of RhoA GTPase by guanine nucleotide-binding alpha-12 (GNA12) and alpha-13 (GNA13) subunits. Acts as a GTPase-activating protein (GAP) for GNA12 and GNA13, and as guanine nucleotide exchange factor (GEF) for RhoA GTPase. Activated G alpha 13/GNA13 stimulates the RhoGEF activity through interaction with the RGS-like domain. This GEF activity is inhibited by binding to activated GNA12. Mediates angiotensin-2-induced RhoA activation. In lymphoid follicles, may trigger activation of GNA13 as part of S1PR2-dependent signaling pathway that leads to inhibition of germinal center (GC) B cell growth and migration outside the GC niche. The chain is Rho guanine nucleotide exchange factor 1 (ARHGEF1) from Homo sapiens (Human).